The chain runs to 309 residues: Taste receptor type 2 member 31 (309 aa).

At 1-2 (MT) the chain is on the extracellular side. Residues 3–23 (TFIPIIFSSLVMVMFVTGNFA) traverse the membrane as a helical segment. Residues 24–55 (NGFIALVNSIESVKRQKISYADQILTALAVSR) lie on the Cytoplasmic side of the membrane. A helical membrane pass occupies residues 56 to 76 (IGLLWVLLLNWYSTVLNPAFY). At 77–100 (SVEVRTTAYNVWAVTGHFSNWLAT) the chain is on the extracellular side. Residues 101–121 (SLSIFYLLKIANFSNLIFLHL) traverse the membrane as a helical segment. Topologically, residues 122-126 (KRRVK) are cytoplasmic. Residues 127-147 (SVILVMLLGPLLFLACQLFVI) traverse the membrane as a helical segment. The Extracellular portion of the chain corresponds to 148–181 (NMKEIVQTKEYEGNXTWKIKLRSAVYLSDATVTT). Asn161 carries N-linked (GlcNAc...) asparagine glycosylation. Residues 182–202 (LGNLVPFTLTLLCFLLLICSL) form a helical membrane-spanning segment. Residues 203–229 (CKHLKKMQLHGKGSQDPSMKVHIKALQ) lie on the Cytoplasmic side of the membrane. Residues 230-250 (TVTSFLLLCAIYFLSIMISVW) form a helical membrane-spanning segment. The Extracellular portion of the chain corresponds to 251 to 259 (SLGSLKNKP). The chain crosses the membrane as a helical span at residues 260–280 (VFMFCKAMRFSYPSIHPFILI). The Cytoplasmic portion of the chain corresponds to 281-309 (WGNKKLKQTFLSVLQQVRYWVKGEKPSSP).

It belongs to the G-protein coupled receptor T2R family.

The protein resides in the membrane. Functionally, receptor that may play a role in the perception of bitterness and is gustducin-linked. May play a role in sensing the chemical composition of the gastrointestinal content. The activity of this receptor may stimulate alpha gustducin, mediate PLC-beta-2 activation and lead to the gating of TRPM5. This Gorilla gorilla gorilla (Western lowland gorilla) protein is Taste receptor type 2 member 31 (TAS2R31).